The chain runs to 102 residues: Large ribosomal subunit protein uL24 (102 aa).

This sequence belongs to the universal ribosomal protein uL24 family. As to quaternary structure, part of the 50S ribosomal subunit.

Its function is as follows. One of two assembly initiator proteins, it binds directly to the 5'-end of the 23S rRNA, where it nucleates assembly of the 50S subunit. Functionally, one of the proteins that surrounds the polypeptide exit tunnel on the outside of the subunit. This chain is Large ribosomal subunit protein uL24, found in Limosilactobacillus fermentum (strain NBRC 3956 / LMG 18251) (Lactobacillus fermentum).